We begin with the raw amino-acid sequence, 98 residues long: NADH-ubiquinone oxidoreductase chain 4L (98 aa).

Helical transmembrane passes span 1–21 (MIPTYMNIMLAFTISLLGMLI), 29–49 (SLLCLEGMMMSLFIMTTLIAL), and 61–81 (IILLVFAACEAAVGLALLVSI).

Belongs to the complex I subunit 4L family. As to quaternary structure, core subunit of respiratory chain NADH dehydrogenase (Complex I) which is composed of 45 different subunits.

The protein localises to the mitochondrion inner membrane. It carries out the reaction a ubiquinone + NADH + 5 H(+)(in) = a ubiquinol + NAD(+) + 4 H(+)(out). In terms of biological role, core subunit of the mitochondrial membrane respiratory chain NADH dehydrogenase (Complex I) which catalyzes electron transfer from NADH through the respiratory chain, using ubiquinone as an electron acceptor. Part of the enzyme membrane arm which is embedded in the lipid bilayer and involved in proton translocation. In Macaca ochreata (Booted macaque), this protein is NADH-ubiquinone oxidoreductase chain 4L (MT-ND4L).